We begin with the raw amino-acid sequence, 76 residues long: Protein RALF-like 30 (76 aa).

Positions 1–22 (MKAWVICLMVISIFMMIEPTLA) are cleaved as a signal peptide. 2 disulfides stabilise this stretch: C37/C46 and C66/C72.

The protein belongs to the plant rapid alkalinization factor (RALF) family.

Its subcellular location is the secreted. Its function is as follows. Cell signaling peptide that may regulate plant stress, growth, and development. Mediates a rapid alkalinization of extracellular space by mediating a transient increase in the cytoplasmic Ca(2+) concentration leading to a calcium-dependent signaling events through a cell surface receptor and a concomitant activation of some intracellular mitogen-activated protein kinases. The sequence is that of Protein RALF-like 30 (RALFL30) from Arabidopsis thaliana (Mouse-ear cress).